Here is a 338-residue protein sequence, read N- to C-terminus: Arginase, mitochondrial (338 aa).

Residues methionine 1–leucine 15 constitute a mitochondrion transit peptide. L-ornithine contacts are provided by residues serine 73 and aspartate 92–asparagine 95. Histidine 157, aspartate 181, histidine 183, and aspartate 185 together coordinate Mn(2+). L-ornithine is bound at residue aspartate 185 to tyrosine 187. Residue glutamate 191–asparagine 193 coordinates substrate. Position 220 (serine 220) interacts with L-ornithine. Positions 266 and 268 each coordinate Mn(2+). Residue glutamate 309 coordinates substrate.

Belongs to the arginase family. As to quaternary structure, forms homohexamers. Mn(2+) is required as a cofactor.

The protein resides in the mitochondrion. The catalysed reaction is L-arginine + H2O = urea + L-ornithine. It catalyses the reaction agmatine + H2O = urea + putrescine. It functions in the pathway nitrogen metabolism; urea cycle; L-ornithine and urea from L-arginine: step 1/1. Its pathway is amine and polyamine biosynthesis; putrescine biosynthesis via agmatine pathway; putrescine from agmatine: step 1/1. In terms of biological role, catalyzes the hydrolysis of L-arginine to urea and L-ornithine. The latter can be utilized in the urea cycle or as a precursor for the synthesis of both polyamines and proline. Possesses agmatinase activity. Catalyzes the formation of putrescine from agmatine. The protein is Arginase, mitochondrial of Medicago truncatula (Barrel medic).